The chain runs to 316 residues: Lys-63-specific deubiquitinase BRCC36 (316 aa).

The residue at position 2 (alanine 2) is an N-acetylalanine. The 168-residue stretch at 12–179 folds into the MPN domain; it reads VHLESDAFLV…YTCFQSIQAQ (168 aa). Histidine 122, histidine 124, and aspartate 135 together coordinate Zn(2+). The JAMM motif signature appears at 122-135; that stretch reads HSHPHITVWPSHVD. Residue serine 258 is modified to Phosphoserine.

The protein belongs to the peptidase M67A family. BRCC36 subfamily. In terms of assembly, component of the ARISC complex, at least composed of UIMC1/RAP80, ABRAXAS1, BRCC3/BRCC36, BABAM2 and BABAM1/NBA1. Component of the BRCA1-A complex, at least composed of BRCA1, BARD1, UIMC1/RAP80, ABRAXAS1, BRCC3/BRCC36, babam2 and BABAM1/NBA1. In the BRCA1-A complex, interacts directly with ABRAXAS1 and babam2. Component of the BRISC complex, at least composed of ABRAXAS2, BRCC3/BRCC36, BABAM2 and BABAM1/NBA1. Identified in a complex with SHMT2 and the other subunits of the BRISC complex. In the BRISC complex, interacts directly with ABRAXAS2. Identified in a complex with ABRAXAS2 and NUMA1. The BRISC complex interacts with the CSN complex. Component of the BRCA1/BRCA2 containing complex (BRCC), which also contains BRCA1, BRCA2, BARD1, BABAM2 and RAD51. BRCC is a ubiquitin E3 ligase complex that enhances cellular survival following DNA damage. Interacts with BRCA1. Binds polyubiquitin. Interacts with PWWP2B. Interacts with HDAC1; this interaction is enhanced in the presence of PWWP2B. Requires Zn(2+) as cofactor. As to expression, heart, brain, placenta, lung, liver, skeletal muscle, kidney and pancreas. Aberrantly expressed in the vast majority of breast tumors.

It localises to the nucleus. The protein localises to the cytoplasm. It is found in the cytoskeleton. The protein resides in the spindle pole. Metalloprotease that specifically cleaves 'Lys-63'-linked polyubiquitin chains. Does not have activity toward 'Lys-48'-linked polyubiquitin chains. Component of the BRCA1-A complex, a complex that specifically recognizes 'Lys-63'-linked ubiquitinated histones H2A and H2AX at DNA lesions sites, leading to target the BRCA1-BARD1 heterodimer to sites of DNA damage at double-strand breaks (DSBs). In the BRCA1-A complex, it specifically removes 'Lys-63'-linked ubiquitin on histones H2A and H2AX, antagonizing the RNF8-dependent ubiquitination at double-strand breaks (DSBs). Catalytic subunit of the BRISC complex, a multiprotein complex that specifically cleaves 'Lys-63'-linked ubiquitin in various substrates. Mediates the specific 'Lys-63'-specific deubiquitination associated with the COP9 signalosome complex (CSN), via the interaction of the BRISC complex with the CSN complex. The BRISC complex is required for normal mitotic spindle assembly and microtubule attachment to kinetochores via its role in deubiquitinating NUMA1. Plays a role in interferon signaling via its role in the deubiquitination of the interferon receptor IFNAR1; deubiquitination increases IFNAR1 activity by enhancing its stability and cell surface expression. Acts as a regulator of the NLRP3 inflammasome by mediating deubiquitination of NLRP3, leading to NLRP3 inflammasome assembly. Down-regulates the response to bacterial lipopolysaccharide (LPS) via its role in IFNAR1 deubiquitination. Deubiquitinates HDAC1 and PWWP2B leading to their stabilization. This is Lys-63-specific deubiquitinase BRCC36 (BRCC3) from Homo sapiens (Human).